Here is a 48-residue protein sequence, read N- to C-terminus: Disintegrin accutin (48 aa).

Position 1 is a pyrrolidone carboxylic acid (Q1). The region spanning 1–48 is the Disintegrin domain; that stretch reads QGAQCTAGPCCWPCKFLKEGTICRRARGDDLDDYCNGISADCPRNPYY. Cystine bridges form between C5–C11, C10–C35, and C23–C42. A Cell attachment site motif is present at residues 27–29; sequence RGD.

The protein belongs to the venom metalloproteinase (M12B) family. P-II subfamily. P-IIa sub-subfamily. Monomer (disintegrin). As to expression, expressed by the venom gland.

Its subcellular location is the secreted. Inhibit human platelet aggregation induced by ADP, collagen, thrombin or the thromboxane analog U46619 in platelet suspension with IC(50) values of 66-267 nM. Acts by inhibiting fibrinogen interaction with platelet receptors GPIIb/GPIIIa (ITGA2B/ITGB3). It also inhibits angiogenesis in vivo and in vitro by blocking integrin alpha-V/beta-3 (ITGAV/ITGB3) of endothelial cells and by inducing apoptosis. The chain is Disintegrin accutin from Deinagkistrodon acutus (Hundred-pace snake).